The following is a 63-amino-acid chain: Large ribosomal subunit protein uL29 (63 aa).

The protein belongs to the universal ribosomal protein uL29 family.

The chain is Large ribosomal subunit protein uL29 from Edwardsiella ictaluri (strain 93-146).